Reading from the N-terminus, the 912-residue chain is Nitrate reductase [NADH] (912 aa).

Positions 1-99 (SVEPRQPFGR…PRDEGTADAW (99 aa)) are disordered. Residues 13-23 (APATAPTARAP) are compositionally biased toward low complexity. Positions 54–68 (AEEDEEDDDEDDEGH) are enriched in acidic residues. Basic and acidic residues predominate over residues 85 to 94 (PSTRDPRDEG). Residue Cys186 participates in Mo-molybdopterin binding. Residues 535–610 (DKQFTMSEVR…LDTYRIGELI (76 aa)) form the Cytochrome b5 heme-binding domain. Residues His570 and His593 each coordinate heme. The 114-residue stretch at 651–764 (REKVPCRLVD…KGPLGHVEYT (114 aa)) folds into the FAD-binding FR-type domain. FAD-binding positions include 703-706 (RAYT), 720-724 (LVKVY), Phe725, Phe732, 737-739 (LMT), Ser788, and Thr791.

The protein belongs to the nitrate reductase family. Homodimer. Requires FAD as cofactor. The cofactor is heme. It depends on Mo-molybdopterin as a cofactor.

The enzyme catalyses nitrite + NAD(+) + H2O = nitrate + NADH + H(+). Nitrate reductase is a key enzyme involved in the first step of nitrate assimilation in plants, fungi and bacteria. In Hordeum vulgare (Barley), this protein is Nitrate reductase [NADH].